The chain runs to 206 residues: CASP-like protein 2C1 (206 aa).

At 1-31 the chain is on the cytoplasmic side; the sequence is MSVLGVGPRTVTPHLRKGMMESSSGISLARA. Residues 32 to 52 traverse the membrane as a helical segment; that stretch reads EAFLRLFAILVLVLTACLLGF. Residues 53–71 are Extracellular-facing; it reads DTQTKLLFSTIKKTATFRD. A helical transmembrane segment spans residues 72-92; that stretch reads LGALQVVVYVDSVAAGYNLLQ. The Cytoplasmic segment spans residues 93–111; the sequence is LGRGFISAKLKGKLINVSY. The helical transmembrane segment at 112–132 threads the bilayer; it reads VTLPWVCFLLDQAAVYTVFSA. The Extracellular segment spans residues 133–161; it reads NTAALQASIIAVTGESSLQWMKVCNRYTR. A helical membrane pass occupies residues 162-182; the sequence is FCIQVGGALLSGYLASLLMVL. Residues 183–206 are Cytoplasmic-facing; it reads LSSLSAFSLFRLYSPKQFHLLKPT.

It belongs to the Casparian strip membrane proteins (CASP) family. In terms of assembly, homodimer and heterodimers.

The protein localises to the cell membrane. The chain is CASP-like protein 2C1 from Vitis vinifera (Grape).